We begin with the raw amino-acid sequence, 134 residues long: Replication enhancer protein (134 aa).

The protein belongs to the geminiviridae replication enhancer protein family. Homooligomer. Interacts with the replication-associated protein (REP). Interacts with host proliferating cell nuclear antigen (PCNA). Interacts with host retinoblastoma-related protein 1 (RBR1), and may thereby deregulate the host cell cycle. Oligomerization and interaction with PCNA are necessary for optimal replication enhancement.

Functionally, increases viral DNA accumulation. Enhances infectivity and symptom expression. The chain is Replication enhancer protein from Squash leaf curl virus (SLCV).